We begin with the raw amino-acid sequence, 802 residues long: LPS-assembly protein LptD (802 aa).

The first 29 residues, 1–29 (MARLFSLKPLVLALGFCFGTHCAAADAVA), serve as a signal peptide directing secretion.

Belongs to the LptD family. In terms of assembly, component of the lipopolysaccharide transport and assembly complex. Interacts with LptE and LptA.

The protein localises to the cell outer membrane. Together with LptE, is involved in the assembly of lipopolysaccharide (LPS) at the surface of the outer membrane. The polypeptide is LPS-assembly protein LptD (Neisseria meningitidis serogroup A / serotype 4A (strain DSM 15465 / Z2491)).